Reading from the N-terminus, the 68-residue chain is Protein SlyX homolog (68 aa).

Belongs to the SlyX family.

This is Protein SlyX homolog from Pseudomonas syringae pv. syringae (strain B728a).